Reading from the N-terminus, the 458-residue chain is UPF0210 protein Mevan_0738 (458 aa).

It belongs to the UPF0210 family.

The polypeptide is UPF0210 protein Mevan_0738 (Methanococcus vannielii (strain ATCC 35089 / DSM 1224 / JCM 13029 / OCM 148 / SB)).